Reading from the N-terminus, the 65-residue chain is Large ribosomal subunit protein bL35 (65 aa).

This sequence belongs to the bacterial ribosomal protein bL35 family.

This Wolbachia sp. subsp. Brugia malayi (strain TRS) protein is Large ribosomal subunit protein bL35.